We begin with the raw amino-acid sequence, 590 residues long: MREMNLLVTSSLGVLLHLVVLCQADDDSELLVNTKSGKVMRTRIPVLSSHISAFLGIPFAEPPVGNMRFRRPEPKKPWSGVWNASTYPNNCQQYVDEQFPGFPGSEMWNPNREMSEDCLYLNIWVPSPRPKSATVMLWIYGGGFYSGSSTLDVYNGKYLAYTEEVVLVSLSYRVGAFGFLALHGSQEAPGNMGLLDQRMALQWVHDNIQFFGGDPKTVTLFGESAGRASVGMHILSPGSRDLFRRAILQSGSPNCPWASVSVAEGRRRAVELRRNLNCNLNSDEDLIQCLREKKPQELIDVEWNVLPFDSIFRFSFVPVIDGEFFPTSLESMLNAGNFKKTQILLGVNKDEGSFFLLYGAPGFSKDSESKISREDFMSGVKLSVPHANDLGLDAVTLQYTDWMDDNNGIKNRDGLDDIVGDHNVICPLMHFVNKYTKFGNGTYLYFFNHRASNLVWPEWMGVIHGYEIEFVFGLPLVKELNYTAEEEALSRRIMHYWATFAKTGNPNEPHSQESKWPLFTTKEQKFIDLNTEPIKVHQRLRVQMCVFWNQFLPKLLNATACDGELSSSGTSSSKGIIFYVLFSILYLIFY.

The N-terminal stretch at 1 to 24 (MREMNLLVTSSLGVLLHLVVLCQA) is a signal peptide. The N-linked (GlcNAc...) asparagine glycan is linked to Asn83. An intrachain disulfide couples Cys91 to Cys118. Ser224 serves as the catalytic Acyl-ester intermediate. Cys278 and Cys289 are joined by a disulfide. The active-site Charge relay system is the Glu351. A disulfide bridge connects residues Cys426 and Cys545. An N-linked (GlcNAc...) asparagine glycan is attached at Asn440. Residue His464 is the Charge relay system of the active site. Residues Asn481 and Asn557 are each glycosylated (N-linked (GlcNAc...) asparagine). Ser567 carries GPI-anchor amidated serine lipidation. The propeptide at 568-590 (SGTSSSKGIIFYVLFSILYLIFY) is removed in mature form.

This sequence belongs to the type-B carboxylesterase/lipase family. In terms of assembly, isoform H form is a homodimer; the asymmetric form is a disulfide-bonded oligomer composed of a collagenic subunit (Q) and a variable number of T catalytic subunits. In terms of processing, an interchain disulfide bond is present in what becomes position 596 of the T isoform. Found in the synapses and to a lower extent in extrajunctional areas of muscle and nerve, and on erythrocyte membranes.

It localises to the cell membrane. The protein localises to the synapse. The enzyme catalyses acetylcholine + H2O = choline + acetate + H(+). In terms of biological role, terminates signal transduction at the neuromuscular junction by rapid hydrolysis of the acetylcholine released into the synaptic cleft. May be involved in cell-cell interactions. This is Acetylcholinesterase (ache) from Torpedo marmorata (Marbled electric ray).